The primary structure comprises 706 residues: Complement C1r-B subcomponent (706 aa).

A signal peptide spans 1-16 (MWLFALLVTLFYGVEG). One can recognise a CUB 1 domain in the interval 17–140 (SIYLPQKLYG…KGFLAYYQAV (124 aa)). The Ca(2+) site is built by glutamate 65, aspartate 73, and aspartate 118. Cysteine 70 and cysteine 88 are disulfide-bonded. Asparagine 124 carries N-linked (GlcNAc...) asparagine glycosylation. Ca(2+) contacts are provided by aspartate 141, leucine 142, and glutamate 144. Residues 141–189 (DLDECASQPNSVEEGLQPRCQHLCHNYVGGYFCSCHPGYELQKDGQSCQ) form the EGF-like; calcium-binding domain. 4 disulfide bridges follow: cysteine 145/cysteine 164, cysteine 160/cysteine 173, cysteine 175/cysteine 188, and cysteine 192/cysteine 219. Ca(2+) contacts are provided by asparagine 166, tyrosine 167, and glycine 170. Residue asparagine 166 is modified to (3R)-3-hydroxyasparagine. In terms of domain architecture, CUB 2 spans 192–304 (CSSELYTEPS…RGWKLHYTTE (113 aa)). At serine 205 the chain carries Phosphoserine; by CK2. The N-linked (GlcNAc...) asparagine glycan is linked to asparagine 220. Ca(2+)-binding residues include aspartate 242, aspartate 252, aspartate 289, and aspartate 293. Cysteines 249 and 267 form a disulfide. Sushi domains follow at residues 306–372 (IKCP…RCKI) and 373–448 (KNCG…RCLP). 5 cysteine pairs are disulfide-bonded: cysteine 308–cysteine 357, cysteine 337–cysteine 370, cysteine 375–cysteine 428, cysteine 405–cysteine 446, and cysteine 450–cysteine 578. In terms of domain architecture, Peptidase S1 spans 463 to 703 (IIGGQPARPG…YVDWIKKEMG (241 aa)). Catalysis depends on charge relay system residues histidine 501 and aspartate 558. N-linked (GlcNAc...) asparagine glycosylation is present at asparagine 582. 2 cysteine pairs are disulfide-bonded: cysteine 621–cysteine 640 and cysteine 651–cysteine 681. The Charge relay system role is filled by serine 655.

It belongs to the peptidase S1 family. As to quaternary structure, core component of the complement C1 complex, a calcium-dependent complex composed of 1 molecule of the C1Q subcomplex, 2 molecules of C1R and 2 molecules of C1S. The C1Q subcomplex is composed 18 subunits: 3 chains of C1QA, C1QB, and C1QC trimerize to form 6 collagen-like triple helices connected to six globular ligand-recognition modules. Within the C1 complex, C1R is a dimer of identical chains, each of which is activated by cleavage into two chains, heavy and light, connected by disulfide bonds. Cleaved and activated by autocatalytic processing to generate Complement C1r subcomponent heavy and light chains that are connected by disulfide bonds. Post-translationally, the iron and 2-oxoglutarate dependent 3-hydroxylation of aspartate and asparagine is (R) stereospecific within EGF domains.

It is found in the secreted. The protein resides in the cell surface. The catalysed reaction is Selective cleavage of Lys(or Arg)-|-Ile bond in complement subcomponent C1s to form the active form of C1s (EC 3.4.21.42).. Activated by the C1Q subcomplex of the C1 complex following C1Q binding to immunoglobulins (IgG or IgM) complexed with antigens to form antigen-antibody complexes on the surface of pathogens. Immunoglobulin-binding promotes autoactivation of C1R, which results in the cleavage of the Arg-Ile bond in the catalytic domain. Its function is as follows. Serine protease component of the complement C1 complex, a multiprotein complex that initiates the classical pathway of the complement system, a cascade of proteins that leads to phagocytosis and breakdown of pathogens and signaling that strengthens the adaptive immune system. C1R catalyzes the first enzymatic step in the classical complement pathway: it is activated by the C1Q subcomplex of the C1 complex, which associates with IgG or IgM immunoglobulins complexed with antigens to form antigen-antibody complexes on the surface of pathogens. Immunoglobulin-binding promotes the autocatalytic cleavage and activation of C1R. Activated C1R then cleaves and activates C1S, the second protease of the classical complement pathway. It is unclear if C1R activates C1S within single, strained C1 complexes or between neighboring C1 complexes on surfaces. This chain is Complement C1r-B subcomponent (C1rb), found in Mus musculus (Mouse).